The primary structure comprises 324 residues: 2-dehydro-3-deoxygluconokinase (324 aa).

Residues 35 to 39 (GAESN), 106 to 108 (YYR), and Arg-170 each bind substrate. ATP-binding positions include 168-170 (NVR), 228-233 (KLGKEG), and 258-261 (GAGD). The substrate site is built by Asp-261 and Asp-297. Asp-261 serves as the catalytic Proton acceptor.

It belongs to the carbohydrate kinase PfkB family.

The enzyme catalyses 2-dehydro-3-deoxy-D-gluconate + ATP = 2-dehydro-3-deoxy-6-phospho-D-gluconate + ADP + H(+). It participates in carbohydrate acid metabolism; 2-dehydro-3-deoxy-D-gluconate degradation; D-glyceraldehyde 3-phosphate and pyruvate from 2-dehydro-3-deoxy-D-gluconate: step 1/2. Catalyzes the phosphorylation of 2-keto-3-deoxygluconate (KDG) to produce 2-keto-3-deoxy-6-phosphogluconate (KDPG). The chain is 2-dehydro-3-deoxygluconokinase (kdgK) from Bacillus subtilis (strain 168).